Reading from the N-terminus, the 194-residue chain is dTTP/UTP pyrophosphatase (194 aa).

The active-site Proton acceptor is the Asp68.

This sequence belongs to the Maf family. YhdE subfamily. It depends on a divalent metal cation as a cofactor.

The protein resides in the cytoplasm. It catalyses the reaction dTTP + H2O = dTMP + diphosphate + H(+). It carries out the reaction UTP + H2O = UMP + diphosphate + H(+). Its function is as follows. Nucleoside triphosphate pyrophosphatase that hydrolyzes dTTP and UTP. May have a dual role in cell division arrest and in preventing the incorporation of modified nucleotides into cellular nucleic acids. This chain is dTTP/UTP pyrophosphatase, found in Clostridioides difficile (strain 630) (Peptoclostridium difficile).